The sequence spans 295 residues: Protease HtpX (295 aa).

The next 2 helical transmembrane spans lie at 4-24 (ILLF…TLSL) and 42-62 (QLLV…LFIS). Residue His-147 participates in Zn(2+) binding. The active site involves Glu-148. His-151 is a binding site for Zn(2+). Transmembrane regions (helical) follow at residues 158–178 (VTLA…ARII) and 195–215 (IAYF…ASAI). Residue Glu-224 participates in Zn(2+) binding.

Belongs to the peptidase M48B family. Zn(2+) is required as a cofactor.

The protein resides in the cell inner membrane. The sequence is that of Protease HtpX from Pseudomonas fluorescens (strain SBW25).